The sequence spans 184 residues: Elongation factor P (184 aa).

This sequence belongs to the elongation factor P family.

It is found in the cytoplasm. Its pathway is protein biosynthesis; polypeptide chain elongation. In terms of biological role, involved in peptide bond synthesis. Stimulates efficient translation and peptide-bond synthesis on native or reconstituted 70S ribosomes in vitro. Probably functions indirectly by altering the affinity of the ribosome for aminoacyl-tRNA, thus increasing their reactivity as acceptors for peptidyl transferase. This Paracidovorax citrulli (strain AAC00-1) (Acidovorax citrulli) protein is Elongation factor P.